Reading from the N-terminus, the 498-residue chain is Cytochrome P450 71B5 (498 aa).

The helical transmembrane segment at 3 to 23 (IFLCFLLLLPLSLIFLKKLLP) threads the bilayer. Cys439 serves as a coordination point for heme.

Belongs to the cytochrome P450 family. Requires heme as cofactor.

The protein localises to the membrane. In Arabidopsis thaliana (Mouse-ear cress), this protein is Cytochrome P450 71B5 (CYP71B5).